The sequence spans 381 residues: Tumor necrosis factor receptor superfamily member 10B (381 aa).

The N-terminal stretch at 1–52 (MEPPGPSTPTASAAARADHYTPGLRPLPKRRLLYSFALLLAVLQAVFVPVTA) is a signal peptide. 3 TNFR-Cys repeats span residues 26 to 86 (PLPK…GNCK), 87 to 129 (PCRE…NTVC), and 130 to 169 (RCKP…NRKC). The Extracellular portion of the chain corresponds to 53–180 (NPAHNRPAGL…SKTAWASWHK (128 aa)). 7 disulfide bridges follow: cysteine 74–cysteine 85, cysteine 88–cysteine 105, cysteine 108–cysteine 121, cysteine 111–cysteine 129, cysteine 131–cysteine 145, cysteine 148–cysteine 161, and cysteine 151–cysteine 169. A helical transmembrane segment spans residues 181–201 (LGLWIGLLVPVVLLIGALLVW). The Cytoplasmic segment spans residues 202-381 (KTGAWRQWLL…ETGPGGSQCV (180 aa)). The tract at residues 228–260 (HSSLLDRQTSSTTNDSNHNTEPGKTQKTGKKLL) is disordered. The segment covering 236-247 (TSSTTNDSNHNT) has biased composition (low complexity). One can recognise a Death domain in the interval 273-356 (KFIFEYCSDI…DAMEKIEDYA (84 aa)). Arginine 293 is a glycosylation site ((Microbial infection) N-beta-linked (GlcNAc) arginine).

As to quaternary structure, monomer. Can interact with TRADD and RIPK1. Three TNFRSF10B molecules interact with the TNFSF10 homotrimer. In the absence of stimulation, interacts with BIRC2, DDX3X and GSK3B. The interaction with BIRC2 and DDX3X is further enhanced upon receptor stimulation and accompanied by DDX3X and BIRC2 cleavage. (Microbial infection) Glycosylated at Arg-293 by S.typhimurium protein Ssek3. In terms of tissue distribution, highly expressed in heart, lung and kidney.

The protein resides in the membrane. Its function is as follows. Receptor for the cytotoxic ligand TNFSF10/TRAIL. The adapter molecule FADD recruits caspase-8 to the activated receptor. The resulting death-inducing signaling complex (DISC) performs caspase-8 proteolytic activation which initiates the subsequent cascade of caspases (aspartate-specific cysteine proteases) mediating apoptosis. Promotes the activation of NF-kappa-B. Essential for ER stress-induced apoptosis. The protein is Tumor necrosis factor receptor superfamily member 10B (Tnfrsf10b) of Mus musculus (Mouse).